The chain runs to 445 residues: tRNA modification GTPase MnmE (445 aa).

Positions 20, 79, and 119 each coordinate (6S)-5-formyl-5,6,7,8-tetrahydrofolate. In terms of domain architecture, TrmE-type G spans 215–371 (GLKLAIIGPP…ILKNIENIAE (157 aa)). Residue Asn-225 participates in K(+) binding. GTP contacts are provided by residues 225–230 (NVGKSS), 244–250 (SNIAGTT), and 269–272 (DTAG). Ser-229 provides a ligand contact to Mg(2+). Ser-244, Ile-246, and Thr-249 together coordinate K(+). Thr-250 is a binding site for Mg(2+). Lys-445 lines the (6S)-5-formyl-5,6,7,8-tetrahydrofolate pocket.

It belongs to the TRAFAC class TrmE-Era-EngA-EngB-Septin-like GTPase superfamily. TrmE GTPase family. In terms of assembly, homodimer. Heterotetramer of two MnmE and two MnmG subunits. K(+) serves as cofactor.

It localises to the cytoplasm. In terms of biological role, exhibits a very high intrinsic GTPase hydrolysis rate. Involved in the addition of a carboxymethylaminomethyl (cmnm) group at the wobble position (U34) of certain tRNAs, forming tRNA-cmnm(5)s(2)U34. In Rickettsia rickettsii (strain Iowa), this protein is tRNA modification GTPase MnmE.